A 328-amino-acid polypeptide reads, in one-letter code: Galactinol synthase 10 (328 aa).

Residue lysine 106 is part of the active site. Aspartate 122, aspartate 124, and histidine 248 together coordinate Mn(2+).

This sequence belongs to the glycosyltransferase 8 family. Galactosyltransferase subfamily. A divalent metal cation serves as cofactor.

The protein resides in the cytoplasm. It carries out the reaction myo-inositol + UDP-alpha-D-galactose = alpha-D-galactosyl-(1-&gt;3)-1D-myo-inositol + UDP + H(+). Functionally, galactinol synthase involved in the biosynthesis of raffinose family oligosaccharides (RFOs) that function as osmoprotectants. May promote plant stress tolerance. This chain is Galactinol synthase 10 (GOLS10), found in Arabidopsis thaliana (Mouse-ear cress).